Consider the following 288-residue polypeptide: NGG1-interacting factor 3 (288 aa).

Belongs to the GTP cyclohydrolase I type 2/NIF3 family. May interact with NGG1.

The protein resides in the mitochondrion. The polypeptide is NGG1-interacting factor 3 (Saccharomyces cerevisiae (strain ATCC 204508 / S288c) (Baker's yeast)).